The chain runs to 352 residues: Membrane progestin receptor alpha (352 aa).

Topologically, residues 1–75 (MATVVMEQIG…FLTLFQRHNE (75 aa)) are cytoplasmic. Residues 76-96 (TLNVWTHLLAAFIILVKWQEI) form a helical membrane-spanning segment. Over 97–110 (SETVDFLRDPHAQP) the chain is Extracellular. The chain crosses the membrane as a helical span at residues 111-131 (LFIVLLAAFTYLSFSALAHLL). Over 132-139 (SAKSELSY) the chain is Cytoplasmic. A helical transmembrane segment spans residues 140–160 (YTFYFLDYVGVAVYQYGSALA). Over 161-175 (HYYYAIEKEWHTKVQ) the chain is Extracellular. The helical transmembrane segment at 176-196 (GLFLPAAAFLAWLTCFGCCYG) threads the bilayer. Over 197 to 242 (KYASPELPKVANKLFQVVPSALAYCLDISPVVHRIYSCYQEGCSDP) the chain is Cytoplasmic. A helical membrane pass occupies residues 243-263 (VVAYHFYHVVFFLIGAYFFCC). The Extracellular segment spans residues 264 to 275 (PHPESLFPGKCD). A helical transmembrane segment spans residues 276–296 (FIGQGHQLFHVFVVVCTLTQV). The Cytoplasmic segment spans residues 297–316 (EALRTDFTERRPFYERLHGD). The helical transmembrane segment at 317 to 337 (LAHDAVALFIFTACCSALTAF) threads the bilayer. Topologically, residues 338-352 (YVRQRVRASLHEKGE) are extracellular.

The protein belongs to the ADIPOR family. In terms of tissue distribution, strongly expressed in ovary and brain; lower expression in testis and pituitary. Not detected in heart, kidney, spleen, intestine, gill and muscle.

The protein localises to the cell membrane. Functionally, steroid membrane receptor. Binds progesterone, progestin and 17-hydroxyprogesterone in vitro. Capable of mediating progestin-induced oocyte maturation. This is Membrane progestin receptor alpha (mpra) from Cynoscion nebulosus (Spotted seatrout).